A 132-amino-acid chain; its full sequence is Actin-related protein 2/3 complex subunit 5A (132 aa).

Ala-2 is modified (N-acetylalanine).

It belongs to the ARPC5 family. As to quaternary structure, component of the Arp2/3 complex composed of ARP2, ARP3, ARPC1/p41-ARC, ARPC2/p34-ARC, ARPC3/p21-ARC, ARPC4/p20-ARC and ARPC5/p16-ARC. Expressed at low levels in all tissues with a relatively highest expression in inflorescences.

The protein resides in the cytoplasm. The protein localises to the cytoskeleton. It is found in the cell projection. In terms of biological role, functions as a component of the Arp2/3 complex which is involved in regulation of actin polymerization and together with an activating nucleation-promoting factor (NPF) mediates the formation of branched actin networks. Arp2/3 complex plays a critical role in the control of cell morphogenesis via the modulation of cell polarity development. The protein is Actin-related protein 2/3 complex subunit 5A (ARPC5A) of Arabidopsis thaliana (Mouse-ear cress).